We begin with the raw amino-acid sequence, 2108 residues long: MNSVAGNKERLAVSTRGKKYGVNEVCSPTKPAAPFSPESWYRKAYEESRAGSRPTPEGAGSALGSSGTPSPGSGTSSPSSFTGSPGPASPGIGTSSPGSLGGSPGFGTGSPGSGSGGGSSPGSDRGVWCENCNARLVELKRQALRLLLPGPFPGKDPAFSAVIHDKLQVPNTIRKAWNDRDNRCDICATHLNQLKQEAIQMVLTLEQAAGSEHYDASPCSPPPLSNIPTLVGSRHVGGLQQPRDWAFVPAPCATSNYTGFANKHGSKPSSLGVSNGAEKKSGSPTHQAKVSLQMATSPSNGNILNSVAIQAHQYLDGTWSLSRTNGVTLYPYQISQLMTESSREGLTEAVLNRYNADKPSACSVPASQGSCVASETSTGTSVAASFFARAAQKLNLSSKKKKHRPSTSSAAEPPLFATSFSGILQTSPPPAPPCLLRAVNKVKDTPGLGKVKVMLRICSTLARDTSESSSFLKVDPRKKQITLYDPLTCGGQNAFQKRGNQVPPKMFAFDAVFPQDASQAEVCAGTVAEVIQSVVNGADGCVFCFGHAKLGKSYTMIGKDDSMQNLGIIPCAISWLFKLINERKEKTGARFSVRVSAVEVWGKEENLRDLLSEVATGSLQDGQSPGVYLCEDPICGTQLQNQSELRAPTAEKAAFFLDAAIASRRSHQQDCDEDDHRNSHVFFTLHIYQYRMEKSGKGGMSGGRSRLHLIDLGSCVKALSKNREGGSGLCLSLSALGNVILALVNGSKHIPYKESKLAMLLRESLGNMNCRTTMIAHISAAVGSYAETLSTIQIASRVLRMKKKKTKYTSSSSGGESSCEEGRMRRPTQLRPFHTRATVDPDFPIAHLSSDPDYSSSSEQSCDTVIYIGPNGTALSDKELTDNEGPPDFVPIVPALQKTRGDSRPAEAGEAAAGKSERDCLKCNTFAELQERLDCIDGSEEPSSFPFEELPAQFGPEQASRGPRLSQAAGASPLSESDKEDNGSEGQLTNREGPELPASKMQRSHSPVPAAAPAHSPSPASPRSVPGSSSQHSASPLVQSPSLQSSRESLNSCGFVEGKPRPMGSPRLGIASLSKTSEYKPPSSPSQRCKVYTQKGVLPSPAPLPPSSKDSGVASRESLLQPEVRTPPVGMSPQVLKKSMSAGSEGFPETPVDDEQQAATPSESKKEILSTTMVTVQQPLELNGEDELVFTLVEELTISGVLDSGRPTSIISFNSDCSARALASGSRPVSIISSISEDLECYSSTAPVSEVSITQFLPLPKMSLDEKAQDAGSRRSSISSWLSEMSAGSEGEQSCHSFIAQTCFGHGEAMAEPVASEFVSSLQNTAVVCREKPKASPDNLLILSEMGDDSFNKAAPIKGCKISTVSKAMVTISNTANLSSCEGYIPMKTNITVYPCIAMSPRNIQEPEAPTATPKAGPTLAQSRESKENSAKKEMKFEDPWLKREEEVKKETAHPNEEGMMRCETATGPSNAETRAEQEQDGKPSPGDRLSSSSGEVSASPVTDNFRRVVDGCEMALPGLATQSPVHPNKSVKSSSLPRAFQKASRQEEPDSLSYYCAAETNGVGAASGTPPSKATLEGKVASPKHCVLARPKGTPPLPPVRKSSLDQKNRASPQHSASGSGTSSPLNQPAAFPAGLPDEPSGKTKDASSSSKLFSAKLEQLASRSNSLGRATVSHYECLSLERAESLSSVSSRLHAGKDGTMPRAGRSLGRSAGTSPPSSGASPKAGQSKISAVSRLLLASPRARGPSASTTKTLSFSTKSLPQAVGQGSSSPPGGKHTPWSTQSLSRNRSSGLASKLPLRAVSGRISELLQGGAGARGLQLRAGPEAEARGGALAEDEPAAAHLLPSPYSKITPPRRPHRCSSGHGSDNSSVLSGELPPAMGKTALFYHSGGSSGYESVMRDSEATGSASSAQDSTSENSSSVGGRCRSLKTPKKRSNPGSQRRRLIPALSLDTSSPVRKPPNSTGVRWVDGPLRSSPRGLGEPFEIKVYEIDDVERLQRRRGGASKEAMCFNAKLKILEHRQQRIAEVRAKYEWLMKELEATKQYLMLDPNKWLSEFDLEQVWELDSLEYLEALECVTERLESRVNFCKAHLMMITCFDITSRRR.

2 disordered regions span residues 1–124 and 263–287; these read MNSV…PGSD and KHGSKPSSLGVSNGAEKKSGSPTHQ. Over residues 40–50 the composition is skewed to basic and acidic residues; that stretch reads WYRKAYEESRA. Over residues 58–98 the composition is skewed to low complexity; sequence GAGSALGSSGTPSPGSGTSSPSSFTGSPGPASPGIGTSSPG. Gly residues predominate over residues 99–120; it reads SLGGSPGFGTGSPGSGSGGGSS. The Kinesin motor domain occupies 450–801; it reads KVKVMLRICS…IQIASRVLRM (352 aa). 546–553 serves as a coordination point for ATP; sequence GHAKLGKS. Disordered regions lie at residues 805 to 825, 876 to 917, 937 to 1166, 1406 to 1504, 1519 to 1653, 1685 to 1799, and 1824 to 1974; these read KTKYTSSSSGGESSCEEGRMR, SDKE…GKSE, DGSE…ESKK, EPEA…PVTD, GLAT…SSSK, AESL…ASKL, and RAGP…WVDG. Over residues 1004-1046 the composition is skewed to low complexity; sequence SHSPVPAAAPAHSPSPASPRSVPGSSSQHSASPLVQSPSLQSS. Residues 1424–1461 are compositionally biased toward basic and acidic residues; sequence RESKENSAKKEMKFEDPWLKREEEVKKETAHPNEEGMM. The span at 1491 to 1500 shows a compositional bias: low complexity; the sequence is SSSSGEVSAS. Composition is skewed to polar residues over residues 1521–1537 and 1611–1628; these read ATQSPVHPNKSVKSSSL and RASPQHSASGSGTSSPLN. 2 stretches are compositionally biased toward low complexity: residues 1713 to 1730 and 1751 to 1763; these read SAGTSPPSSGASPKAGQS and STTKTLSFSTKSL. Polar residues predominate over residues 1781–1795; the sequence is PWSTQSLSRNRSSGL. Positions 1824–1836 are enriched in low complexity; sequence RAGPEAEARGGAL. Thr1855 bears the Phosphothreonine mark. Polar residues-rich tracts occupy residues 1866–1875 and 1907–1925; these read GHGSDNSSVL and ATGSASSAQDSTSENSSSV. Residues 1930-1948 are compositionally biased toward basic residues; the sequence is RSLKTPKKRSNPGSQRRRL. Over residues 1954–1968 the composition is skewed to polar residues; the sequence is LDTSSPVRKPPNSTG. A Phosphoserine modification is found at Ser1958.

This sequence belongs to the TRAFAC class myosin-kinesin ATPase superfamily. Kinesin family. KIF26 subfamily. In terms of assembly, interacts with MYH10. Phosphorylation at Thr-1855 and Ser-1958 by CDKs, mainly CDK2 and CDK5, enhances the interaction with NEDD4, polyubiquitination, and subsequent proteasomal degradation. Phosphorylation occurs upon loss of interaction with microtubules. In terms of processing, polyubiquitinated by NEDD4, resulting in proteasomal degradation.

The protein resides in the cytoplasm. It is found in the cytoskeleton. In terms of biological role, essential for embryonic kidney development. Plays an important role in the compact adhesion between mesenchymal cells adjacent to the ureteric buds, possibly by interacting with MYH10. This could lead to the establishment of the basolateral integrity of the mesenchyme and the polarized expression of ITGA8, which maintains the GDNF expression required for further ureteric bud attraction. Although it seems to lack ATPase activity it is constitutively associated with microtubules. This Homo sapiens (Human) protein is Kinesin-like protein KIF26B (KIF26B).